The sequence spans 769 residues: Serine/threonine-protein kinase PLK4 (769 aa).

The region spanning 14-267 (YEVQHLLGKG…LEAVLCHPFM (254 aa)) is the Protein kinase domain. ATP-binding positions include 20-28 (LGKGGFATV) and lysine 43. Aspartate 138 (proton acceptor) is an active-site residue. Residues 381-498 (EDRISVPPLN…ARFVGLVKSK (118 aa)) enclose the Cryptic POLO box 1 (CPB1) domain. The Cryptic POLO box 2 (CPB2) domain maps to 499 to 602 (TPKVTYFSTL…GRRPITDVQP (104 aa)). In terms of domain architecture, POLO box spans 660-739 (PIKRINVPEI…IPNIQLKLKT (80 aa)).

It belongs to the protein kinase superfamily. Ser/Thr protein kinase family. CDC5/Polo subfamily. As to quaternary structure, homodimer. Interacts with Alms1a. Post-translationally, ubiquitinated by the SCF-slmb ubiquitin ligase complex; leading to its degradation by the proteasome during interphase and regulating centriole number and ensuring the block to centriole reduplication. In terms of tissue distribution, expressed in testis (at protein level).

Its subcellular location is the cytoplasm. It localises to the cytoskeleton. The protein localises to the microtubule organizing center. The protein resides in the centrosome. It is found in the centriole. It catalyses the reaction L-seryl-[protein] + ATP = O-phospho-L-seryl-[protein] + ADP + H(+). It carries out the reaction L-threonyl-[protein] + ATP = O-phospho-L-threonyl-[protein] + ADP + H(+). Serine/threonine-protein kinase that plays a central role in centriole duplication. Able to trigger procentriole formation on the surface of the mother centriole cylinder, using mother centriole as a platform, leading to the recruitment of centriole biogenesis proteins such as Sas-6. When overexpressed, it is able to induce centrosome amplification through the simultaneous generation of multiple procentrioles adjoining each parental centriole during S phase. Centrosome amplification following overexpression can initiate tumorigenesis, highlighting the importance of centrosome regulation in cancers. This chain is Serine/threonine-protein kinase PLK4 (SAK), found in Drosophila melanogaster (Fruit fly).